Consider the following 66-residue polypeptide: Putative transmembrane protein ORF66 (66 aa).

Topologically, residues 1-6 are cytoplasmic; it reads MSDVDD. The chain crosses the membrane as a helical span at residues 7-27; that stretch reads TIVDSIAIVGAILIGIFLIVV. The Extracellular portion of the chain corresponds to 28–39; the sequence is SVSNTSLFNNTE. Residues 40–60 traverse the membrane as a helical segment; the sequence is YDSMINSVLVIISSVIAYTLG. Residues 61–66 lie on the Cytoplasmic side of the membrane; that stretch reads KRRSKS.

Its subcellular location is the host membrane. This chain is Putative transmembrane protein ORF66, found in Acidianus filamentous virus 2 (isolate Italy/Pozzuoli) (AFV-2).